A 137-amino-acid polypeptide reads, in one-letter code: ATP synthase epsilon chain (137 aa).

Belongs to the ATPase epsilon chain family. F-type ATPases have 2 components, CF(1) - the catalytic core - and CF(0) - the membrane proton channel. CF(1) has five subunits: alpha(3), beta(3), gamma(1), delta(1), epsilon(1). CF(0) has three main subunits: a, b and c.

Its subcellular location is the cell inner membrane. Functionally, produces ATP from ADP in the presence of a proton gradient across the membrane. The sequence is that of ATP synthase epsilon chain from Pseudoalteromonas atlantica (strain T6c / ATCC BAA-1087).